A 139-amino-acid polypeptide reads, in one-letter code: Chemical-damaging agent resistance protein B (139 aa).

This sequence belongs to the CAPAB/TerDEXZ family.

Functionally, not known; could confer methyl methane sulfonate (MMS), mitomycin C (MC), and UV resistance. In Clostridium acetobutylicum, this protein is Chemical-damaging agent resistance protein B.